A 238-amino-acid chain; its full sequence is Ribosomal RNA small subunit methyltransferase G (238 aa).

Residues Gly99, Leu104, 122-124 (DAT), 150-151 (VE), and Arg164 contribute to the S-adenosyl-L-methionine site.

Belongs to the methyltransferase superfamily. RNA methyltransferase RsmG family.

It localises to the cytoplasm. Functionally, specifically methylates the N7 position of a guanine in 16S rRNA. This chain is Ribosomal RNA small subunit methyltransferase G, found in Chlorobium luteolum (strain DSM 273 / BCRC 81028 / 2530) (Pelodictyon luteolum).